A 466-amino-acid polypeptide reads, in one-letter code: Neuronal acetylcholine receptor subunit non-alpha-3 (466 aa).

Residues 1-28 (MKLQISGLLLVTAVAYATIEAPEEFVSL) form the signal peptide. Topologically, residues 29–235 (AEMEDTLLRN…VTYSFILKRL (207 aa)) are extracellular. N-linked (GlcNAc...) asparagine glycosylation is found at Asn-54, Asn-141, Asn-169, and Asn-208. The cysteines at positions 156 and 170 are disulfide-linked. A run of 3 helical transmembrane segments spans residues 236–260 (PLFY…VFYL), 268–285 (LLLS…LLVI), and 302–323 (YLLF…VINV). Over 324-438 (HHRSSATYHP…WKFVAQVLDR (115 aa)) the chain is Cytoplasmic. The chain crosses the membrane as a helical span at residues 439 to 456 (IFLWVFLTASVLGTILIF).

This sequence belongs to the ligand-gated ion channel (TC 1.A.9) family. Acetylcholine receptor (TC 1.A.9.1) subfamily. In terms of assembly, neuronal AChR seems to be composed of two different type of subunits: alpha and non-alpha (beta). As to expression, retina, tectum and brain.

The protein resides in the postsynaptic cell membrane. It is found in the cell membrane. In terms of biological role, after binding acetylcholine, the AChR responds by an extensive change in conformation that affects all subunits and leads to opening of an ion-conducting channel across the plasma membrane. In Carassius auratus (Goldfish), this protein is Neuronal acetylcholine receptor subunit non-alpha-3.